The chain runs to 208 residues: Translation initiation factor 2 subunit beta (208 aa).

The TRAM domain maps to 144–202; it reads GIEEGKEYTVEISEVGSSGEGRASFRGFTIFVPGTKKGETVKVKIKKIKNDVAIAEVVS.

Belongs to the eIF-2-beta/eIF-5 family. In terms of assembly, heterotrimer composed of an alpha, a beta and a gamma chain.

Functionally, eIF-2 functions in the early steps of protein synthesis by forming a ternary complex with GTP and initiator tRNA. This chain is Translation initiation factor 2 subunit beta (eif2b), found in Thermoplasma volcanium (strain ATCC 51530 / DSM 4299 / JCM 9571 / NBRC 15438 / GSS1).